The primary structure comprises 442 residues: Syndecan-3 (442 aa).

2 disordered regions span residues 1-25 (MKPGPPRRGTAQGQRVDTATHGPGA) and 55-85 (RPVDLEGSGDDDSFPDDELDDLYSGSGSGYF). The first 44 residues, 1 to 44 (MKPGPPRRGTAQGQRVDTATHGPGARGLLLPPLLLLLLAGRAAG), serve as a signal peptide directing secretion. Residues 45-387 (AQRWRNENFE…SILERKEVLV (343 aa)) lie on the Extracellular side of the membrane. Residues 61–75 (GSGDDDSFPDDELDD) show a composition bias toward acidic residues. 4 O-linked (Xyl...) (glycosaminoglycan) serine glycosylation sites follow: Ser78, Ser80, Ser82, and Ser89. Thr107 carries an O-linked (GalNAc) threonine; by GALNT13 glycan. 5 disordered regions span residues 151–175 (EEPSQRATTISTTTSTTAATTTGAP), 180–199 (APATAATTAPSTPAAPPATA), 225–244 (ATTPAVPSPPTTVTTLDTEA), 252–327 (TATS…TTQP), and 339–372 (AAAKPSPPLGTLPKGARPGLGLHDNAIDSGSSAA). Positions 157–175 (ATTISTTTSTTAATTTGAP) are enriched in low complexity. An O-linked (GalNAc) serine; by GALNT13 glycan is attached at Ser161. Thr162, Thr163, Thr170, and Thr172 each carry an O-linked (GalNAc) threonine; by GALNT13 glycan. Positions 276 to 287 (TLPLGTTAPGPT) are enriched in low complexity. The segment covering 289 to 303 (VAQTPTPESLLTTTQ) has biased composition (polar residues). 2 O-linked (Xyl...) (glycosaminoglycan) serine glycosylation sites follow: Ser315 and Ser367. A helical membrane pass occupies residues 388 to 408 (AVIVGGVVGALFAAFLVTLLI). Residues Tyr409, Tyr419, Tyr431, and Tyr441 each carry the phosphotyrosine modification. Over 409–442 (YRMKKKDEGSYTLEEPKQASVTYQKPDKQEEFYA) the chain is Cytoplasmic. Residues 419–442 (YTLEEPKQASVTYQKPDKQEEFYA) form a disordered region. Residues 433–442 (KPDKQEEFYA) show a composition bias toward basic and acidic residues.

It belongs to the syndecan proteoglycan family. As to quaternary structure, interacts with TIAM1. Interacts (via heparan sulfate chains) with PTN; this interaction mediates the neurite outgrowth-promoting signal from PTN to the cytoskeleton of growing neurites; this interaction mediates osteoblast recruitment. Interacts with MDK; this interaction induces SDC3 clustering; this interaction induces neuronal cell adhesion and neurite outgrowth. Post-translationally, O-glycosylated within the Thr/Ser-rich region which could interact with lectin domains on other molecules. In terms of tissue distribution, high levels in neonatal brain, heart, and Schwann cells, barely detectable in neonatal or adult liver, or adult brain.

It localises to the cell membrane. In terms of biological role, cell surface proteoglycan that may bear heparan sulfate. May have a role in the organization of cell shape by affecting the actin cytoskeleton, possibly by transferring signals from the cell surface in a sugar-dependent mechanism. The protein is Syndecan-3 (Sdc3) of Rattus norvegicus (Rat).